Reading from the N-terminus, the 393-residue chain is MSDSNKKTCNDAKQPILVLDLVRLVLERLSFVDFHRARCVSSVWYSASKSCIGGTNPTAPWIILFPNEHVKTNNDSCKSIDPRDHSSYTIRDLGFDMVRSRCLASSGSWFLMLDHKTDFHLLNLFTRERIPLPSLESIDGLQMKFVRTGDCGFEMSMYYKAHGLISYGKNSDLRISDAVLWVDEKNGDYFVVWFHHSTFAYHKKGGDNNSWKVFQPSKHQGCINMVFKEGKLYVLNPARNISVFDFSGGHSPVEYATPPSPNDDYYVRNLAVTLSGEVLIISSNPKKCFVKLYKIDPKSSEWRLIKSIGDEALILDLGITVAAKDGVMRNCIYFSHHELLRYKGVSLCNDDKYGICIYHIKTKKKVQEFEHLTTSSPILFKDARWFFPTFGGN.

The region spanning 12 to 59 is the F-box domain; the sequence is AKQPILVLDLVRLVLERLSFVDFHRARCVSSVWYSASKSCIGGTNPTA.

The protein localises to the cytoplasm. The protein resides in the nucleus. Its subcellular location is the nucleolus. Functionally, component of SCF(ASK-cullin-F-box) E3 ubiquitin ligase complexes, which may mediate the ubiquitination and subsequent proteasomal degradation of target proteins. Required for brassinosteroid (BR) signal transduction. Mediates ASK7/BIN2/SK21 inactivation both by competing with substrate binding (e.g. BZR1) and by promoting its ubiquitination and subsequent proteasomal degradation. The polypeptide is F-box protein KIB4 (Arabidopsis thaliana (Mouse-ear cress)).